Here is a 459-residue protein sequence, read N- to C-terminus: Glutamate--tRNA ligase 1 (459 aa).

The 'HIGH' region motif lies at 8–18 (PSPTGYIHIGN). The short motif at 249–253 (GLSKR) is the 'KMSKS' region element. Lys-252 is an ATP binding site.

It belongs to the class-I aminoacyl-tRNA synthetase family. Glutamate--tRNA ligase type 1 subfamily. In terms of assembly, monomer.

Its subcellular location is the cytoplasm. It catalyses the reaction tRNA(Glu) + L-glutamate + ATP = L-glutamyl-tRNA(Glu) + AMP + diphosphate. In terms of biological role, catalyzes the attachment of glutamate to tRNA(Glu) in a two-step reaction: glutamate is first activated by ATP to form Glu-AMP and then transferred to the acceptor end of tRNA(Glu). The chain is Glutamate--tRNA ligase 1 from Bartonella quintana (strain Toulouse) (Rochalimaea quintana).